A 547-amino-acid chain; its full sequence is MFS-type transporter ltbE (547 aa).

A disordered region spans residues 1–23 (MEIAAETTGPAGVTTDVTNAEES). 13 helical membrane-spanning segments follow: residues 33 to 53 (QGWALASLTVAFMSICLVLAI), 74 to 94 (DIGWYGSSYLIAQMALLPTCG), 104 to 124 (WVYCLSLAIFELGSIIAAVAP), 135 to 155 (ISGLGAAGLVSGTTTILSYCV), 165 to 185 (PIVLGMYNIGSAMGPLIGGSI), 195 to 215 (FIFWINLPFGAVALVLVWFTL), 240 to 260 (ATLLLGATTCLNLALQWGGIV), 267 to 287 (KVFGCLIGFGLLLITFLCLQW), 310 to 330 (GFMMLVQVAIVVQSYFWPIYF), 343 to 363 (INLLPLIISNSLSTLCAGSLA), 370 to 390 (VPFMWVGPLILATGGGLYQLV), 399 to 419 (WIGFQILSGVGYGCCSQMPIL), and 432 to 452 (TGLVMIMFFQMLGGALAPSVG). N-linked (GlcNAc...) asparagine glycosylation occurs at asparagine 463. Residues 506 to 526 (VFWVGVATPALAWIASWAMEW) form a helical membrane-spanning segment.

The protein belongs to the major facilitator superfamily. TCR/Tet family.

The protein localises to the cell membrane. Its function is as follows. MFS-type transporter; part of the gene cluster that mediates the biosynthesis of luteodienoside A, a glycosylated polyketide consisting of an unusual 1-O-beta-D-glucopyranosyl-myo-inositol (glucinol) ester of 3-hydroxy-2,2,4-trimethylocta-4,6-dienoic acid. LtbE is probably involved in the secretion of luteodienoside A. The chain is MFS-type transporter ltbE from Aspergillus luteorubrus.